The sequence spans 86 residues: Large ribosomal subunit protein bL31B (86 aa).

This sequence belongs to the bacterial ribosomal protein bL31 family. Type B subfamily. As to quaternary structure, part of the 50S ribosomal subunit.

In Streptococcus pyogenes serotype M1, this protein is Large ribosomal subunit protein bL31B.